The sequence spans 225 residues: Uracil-DNA glycosylase 1 (225 aa).

The Proton acceptor role is filled by D68.

This sequence belongs to the uracil-DNA glycosylase (UDG) superfamily. UNG family.

It is found in the cytoplasm. It catalyses the reaction Hydrolyzes single-stranded DNA or mismatched double-stranded DNA and polynucleotides, releasing free uracil.. Excises uracil residues from the DNA which can arise as a result of misincorporation of dUMP residues by DNA polymerase or due to deamination of cytosine. In Streptomyces coelicolor (strain ATCC BAA-471 / A3(2) / M145), this protein is Uracil-DNA glycosylase 1 (ung1).